A 306-amino-acid polypeptide reads, in one-letter code: Porphobilinogen deaminase (306 aa).

The residue at position 239 (C239) is an S-(dipyrrolylmethanemethyl)cysteine.

Belongs to the HMBS family. Monomer. Dipyrromethane serves as cofactor.

It carries out the reaction 4 porphobilinogen + H2O = hydroxymethylbilane + 4 NH4(+). It participates in porphyrin-containing compound metabolism; protoporphyrin-IX biosynthesis; coproporphyrinogen-III from 5-aminolevulinate: step 2/4. In terms of biological role, tetrapolymerization of the monopyrrole PBG into the hydroxymethylbilane pre-uroporphyrinogen in several discrete steps. The chain is Porphobilinogen deaminase from Helicobacter pylori (strain G27).